The chain runs to 994 residues: Chloride channel protein 1 (994 aa).

The Cytoplasmic segment spans residues 1 to 118 (MERSQSQQHG…VLRRKLGEDW (118 aa)). The disordered stretch occupies residues 37 to 61 (SENGGLQHRPRKDLGPRHNAHPTQI). Residues 119 to 150 (IFLVLLGLLMALVSWCMDYVSAKSLQAYKWTY) traverse the membrane as a helical segment. Residues 151–158 (AQMQPSLP) are Extracellular-facing. A helical transmembrane segment spans residues 159 to 179 (LQYLAWVTFPLILILFSALFC). Residues 180–183 (QLIS) are Cytoplasmic-facing. Positions 184-189 (PQAVGS) form an intramembrane region, note=Loop between two helices. Residues 188–192 (GSGIP) carry the Selectivity filter part_1 motif. A chloride-binding site is contributed by S189. The helical intramembrane region spans 190-195 (GIPEMK). Residues 196-208 (TILRGVVLKEYLT) are Cytoplasmic-facing. The helical intramembrane region spans 209–224 (LKAFVAKVVALTAGLG). The segment at residues 225–230 (SGIPVG) is an intramembrane region (note=Loop between two helices). The Selectivity filter part_2 signature appears at 230 to 234 (GKEGP). The segment at residues 231–246 (KEGPFVHIASICAAVL) is an intramembrane region (helical). Residues 247–268 (SKFMSMFSGVYEQPYYYTDILT) lie on the Cytoplasmic side of the membrane. 2 intramembrane regions (helical) span residues 269–280 (VGCAVGVGCCFG) and 281–290 (TPLGGVLFSI). The Cytoplasmic portion of the chain corresponds to 291–301 (EVTSTYFAVRN). The helical transmembrane segment at 302–321 (YWRGFFAATFSAFVFRVLAV) threads the bilayer. The Extracellular segment spans residues 322-347 (WNKDAVTITALFRTNFRMDFPFDLKE). Residues 348 to 376 (LPAFAVIGICCGFLGAVFVYLHRQVMLGV) form a helical membrane-spanning segment. Topologically, residues 377 to 390 (RKHKALSQFLAKHR) are cytoplasmic. Residues 391–408 (LLYPGIVTFVIASLTFPP) traverse the membrane as a helical segment. Over 409 to 414 (GMGQFM) the chain is Extracellular. The segment at residues 415-418 (AGEL) is an intramembrane region (note=Loop between two helices). The helical intramembrane region spans 419–426 (MPREAIST). Over 427–457 (LFDNNTWVKHIGDPKSLGQSAVWIHPQVNVV) the chain is Extracellular. The segment at residues 458 to 475 (IIILLFFVMKFWMSIVAT) is an intramembrane region (helical). An intramembrane region (note=Loop between two helices) is located at residues 476–482 (TMPIPCG). The short motif at 482–486 (GGFMP) is the Selectivity filter part_3 element. Residues 483 to 498 (GFMPVFVLGAAFGRLV) constitute an intramembrane region (helical). F484 is a binding site for chloride. Over 499-521 (GEIMAMLFPEGILFDDIIYKILP) the chain is Extracellular. Positions 522-538 (GGYAVIGAAALTGAVSH) form an intramembrane region, helical. Positions 539–540 (TV) form an intramembrane region, note=Loop between two helices. The helical intramembrane region spans 541–554 (STAVICFELTGQIA). At 555–557 (HIL) the chain is on the extracellular side. An intramembrane region (helical) is located at residues 558-571 (PMMVAVILANMVAQ). An intramembrane region (note=Loop between two helices) is located at residues 572-575 (SLQP). The segment at residues 576 to 578 (SLY) is an intramembrane region (helical). Y578 contacts chloride. At 579–994 (DSIIQVKKLP…DEEDEDELIL (416 aa)) the chain is on the cytoplasmic side. A CBS 1 domain is found at 609–668 (MVRDVKFVSASCTYGELRNLLQTTTVKTLPLVDSKDSMILLGSVERSELQSLLQRHLCAE). 3 disordered regions span residues 710 to 769 (EDED…SADQ), 880 to 923 (TKSG…DGAP), and 965 to 994 (NLGP…ELIL). Positions 725-741 (TPTPPPPPPPPLPPQFP) are enriched in pro residues. The region spanning 827–882 (IDQSPFQLVEQTTLHKTHTLFSLLGLHLAYVTSMGKLRGVLALEELQKAIKGHTKS) is the CBS 2 domain. S892 is modified (phosphoserine). Positions 985–994 (DEEDEDELIL) are enriched in acidic residues.

Belongs to the chloride channel (TC 2.A.49) family. ClC-1/CLCN1 subfamily. Homodimer. Predominantly expressed in skeletal muscles.

The protein localises to the cell membrane. Its subcellular location is the sarcolemma. It localises to the T-tubule. It catalyses the reaction chloride(in) = chloride(out). The enzyme catalyses bromide(in) = bromide(out). It carries out the reaction iodide(out) = iodide(in). The catalysed reaction is thiocyanate(in) = thiocyanate(out). It catalyses the reaction nitrate(in) = nitrate(out). With respect to regulation, modulated by membrane voltage with depolarization favouring channel opening and hyperpolarization favouring channel closure. Inhibited by acidic pH and ATP binding due to a shift of voltage dependence of common gating to more positive voltages. Inhibited by 9-anthracene-carboxylic acid. Voltage-gated chloride channel involved in skeletal muscle excitability. Generates most of the plasma membrane chloride conductance in skeletal muscle fibers, stabilizes the resting membrane potential and contributes to the repolarization phase during action potential firing. Forms a homodimeric channel where each subunit has its own ion conduction pathway. Conducts double-barreled currents controlled by two types of gates, two fast glutamate gates that control each subunit independently and a slow common gate that opens and shuts off both subunits simultaneously. Has a significant open probability at muscle resting potential and is further activated upon membrane depolarization. Permeable to small monovalent anions with ion selectivity for chloride &gt; thiocyanate &gt; bromide &gt; nitrate &gt; iodide. The sequence is that of Chloride channel protein 1 (Clcn1) from Rattus norvegicus (Rat).